The sequence spans 830 residues: Probable mixed-linked glucan synthase 7 (830 aa).

A run of 2 helical transmembrane segments spans residues 61 to 81 (LTIFVRIAIFVLFFKWRITYA) and 98 to 118 (AATFWTASIAGELWFAFMWVL). D186 is an active-site residue. The stretch at 251–279 (ELVRDRRRVRREYEEMRLRIDALQAADAR) forms a coiled coil. Substrate contacts are provided by D367 and D369. D529 is a catalytic residue. Helical transmembrane passes span 613-633 (LFLMAYCLFPAIPLIAGGGGW), 638-658 (TPTYVAFLAALMVTLAAVAVL), 676-696 (FWMVSATSAYLAAVAQVALKV), 735-755 (ALMAPTAAALAVNVASMAAAG), 776-796 (LPVAFNVWVVVHLYPFALGLM), and 805-825 (PILFLFAVVAYLAVRFLCLLL).

Belongs to the glycosyltransferase 2 family. Plant cellulose synthase-like F subfamily. In terms of tissue distribution, expressed in mature pollen.

It is found in the golgi apparatus membrane. In terms of biological role, may catalyze both beta-1,3 and beta-1,4 glycosidic linkage on beta-D-glucan. Essential for (1,3;1,4)-beta-D-glucans synthesis in grasses and cereals (Poaceae). The mixed-linked glucans (which are not present in walls of dicotyledons or most other monocotyledonous plants) are particularly important constituents of the walls of the starchy endosperm and aleurone cells of cereal grains such as oats, wheat, rice and barley. They can account for up to 70% by weight of the wall. This chain is Probable mixed-linked glucan synthase 7 (CSLF7), found in Oryza sativa subsp. japonica (Rice).